The chain runs to 65 residues: Large ribosomal subunit protein bL35 (65 aa).

It belongs to the bacterial ribosomal protein bL35 family.

The chain is Large ribosomal subunit protein bL35 from Enterobacter sp. (strain 638).